The chain runs to 119 residues: Putative nitrilase-like protein YIL165C (119 aa).

In terms of domain architecture, CN hydrolase spans 1-82 (MKNIAYEGRL…EGLLTAEINT (82 aa)). Asp21 serves as the catalytic Proton acceptor.

It belongs to the carbon-nitrogen hydrolase superfamily. Nitrilase family.

The polypeptide is Putative nitrilase-like protein YIL165C (Saccharomyces cerevisiae (strain ATCC 204508 / S288c) (Baker's yeast)).